The primary structure comprises 1892 residues: Protein TIC 214 (1892 aa).

The next 6 helical transmembrane spans lie at isoleucine 18–glycine 38, phenylalanine 64–leucine 84, proline 87–histidine 107, leucine 124–leucine 144, valine 172–isoleucine 192, and isoleucine 221–isoleucine 241. 3 disordered regions span residues serine 250 to aspartate 300, arginine 794 to arginine 814, and arginine 1581 to valine 1609. The span at valine 256–threonine 268 shows a compositional bias: acidic residues. Residues arginine 1581–asparagine 1602 show a composition bias toward basic and acidic residues.

This sequence belongs to the TIC214 family. Part of the Tic complex.

Its subcellular location is the plastid. The protein resides in the chloroplast inner membrane. In terms of biological role, involved in protein precursor import into chloroplasts. May be part of an intermediate translocation complex acting as a protein-conducting channel at the inner envelope. This Nicotiana tomentosiformis (Tobacco) protein is Protein TIC 214.